The chain runs to 271 residues: Dioscorin dioA3 (271 aa).

Positions 1–21 are cleaved as a signal peptide; it reads MSSSTLLHLLLLSSLLFSCLS. One can recognise an Alpha-carbonic anhydrase domain in the interval 28 to 262; the sequence is DEFSYIEGNP…TNFRSVFYFE (235 aa). An intrachain disulfide couples Cys53 to Cys212. His94 functions as the Proton acceptor in the catalytic mechanism. Residues Asp95, 120-122, Gln139, and 208-209 each bind L-ascorbate; these read HFH and TA.

It belongs to the alpha-carbonic anhydrase family. In terms of assembly, monomer. Homodimer. In terms of processing, not glycosylated. Expressed in tuber (at protein level).

It carries out the reaction hydrogencarbonate + H(+) = CO2 + H2O. It catalyses the reaction 2 monodehydro-L-ascorbate radical + NADH + H(+) = 2 L-ascorbate + NAD(+). With respect to regulation, the carbonate dehydratase activity is not substantially changed by the addition of Zn(2+). In terms of biological role, storage protein of tuber. Involved in protection against oxidative stress. Has carbonate dehydratase, trypsin inhibitor, dehydroascorbate (DHA) reductase and monodehydroascorbate (MDA) reductase activities. Catalyzes the reactions of carbonate dehydratase and DHA reductase independently of zinc and glutathione (GSH). The coupled reaction is capable of recycling a plant antioxidant ascorbate using ubiquitous compounds H(2)O and CO(2). Exhibits antioxidant activity. Able to scavenge 1,1-diphenyl-2-picrylhydrazyl (DPPH) radical. Exhibits immunomodulatory activity. Activates Toll-like receptor 4 signaling pathways by up-regulating the gene expression of pro-inflammatory cytokines, such as tumor necrosis factor alpha, interleukin-1 beta and interleukin-6, and chemokines RANTES and MCP-1, in mouse RAW 264.7 macrophages. Stimulates the phagocytosis of E.coli by the LPS-treated mouse macrophages. The polypeptide is Dioscorin dioA3 (Dioscorea japonica (Japanese yam)).